The primary structure comprises 1412 residues: DNA-directed RNA polymerase subunit beta' (1412 aa).

Positions 543, 545, and 547 each coordinate Mg(2+). Positions 1017, 1092, 1099, and 1102 each coordinate Zn(2+).

The protein belongs to the RNA polymerase beta' chain family. In terms of assembly, the RNAP catalytic core consists of 2 alpha, 1 beta, 1 beta' and 1 omega subunit. When a sigma factor is associated with the core the holoenzyme is formed, which can initiate transcription. Mg(2+) is required as a cofactor. Zn(2+) serves as cofactor.

It carries out the reaction RNA(n) + a ribonucleoside 5'-triphosphate = RNA(n+1) + diphosphate. Functionally, DNA-dependent RNA polymerase catalyzes the transcription of DNA into RNA using the four ribonucleoside triphosphates as substrates. The polypeptide is DNA-directed RNA polymerase subunit beta' (Mesomycoplasma hyopneumoniae (strain 232) (Mycoplasma hyopneumoniae)).